Here is a 122-residue protein sequence, read N- to C-terminus: Large ribosomal subunit protein uL14 (122 aa).

Belongs to the universal ribosomal protein uL14 family. As to quaternary structure, part of the 50S ribosomal subunit. Forms a cluster with proteins L3 and L19. In the 70S ribosome, L14 and L19 interact and together make contacts with the 16S rRNA in bridges B5 and B8.

Binds to 23S rRNA. Forms part of two intersubunit bridges in the 70S ribosome. The chain is Large ribosomal subunit protein uL14 from Thermomicrobium roseum (strain ATCC 27502 / DSM 5159 / P-2).